The chain runs to 2322 residues: Protein sidekick homolog (2322 aa).

Residues 1–26 (MNYRIFLLFCTTTVLWSVVSTQLVLG) form the signal peptide. The Extracellular segment spans residues 27–2020 (KPPIFQNTGP…IPDDPFYTTW (1994 aa)). Ig-like C2-type domains are found at residues 28–105 (PPIF…AAIS), 217–319 (PSLQ…AYLT), and 324–397 (PVLK…ADMS). Intrachain disulfides connect Cys-52/Cys-94, Cys-247/Cys-301, and Cys-345/Cys-386. Asn-408 carries an N-linked (GlcNAc...) asparagine glycan. 2 consecutive Ig-like C2-type domains span residues 450–545 (PFTS…VQVN) and 548–639 (SLIE…AMLQ). Intrachain disulfides connect Cys-481-Cys-529 and Cys-569-Cys-623. N-linked (GlcNAc...) asparagine glycans are attached at residues Asn-633 and Asn-656. 13 consecutive Fibronectin type-III domains span residues 646 to 752 (MPER…MPQQ), 757 to 854 (APRN…TAEG), 859 to 958 (APKN…TEED), 962 to 1056 (AVDE…VPPE), 1060 to 1155 (RPSM…TLQT), 1160 to 1255 (PSQR…TYES), 1260 to 1360 (SPRN…TLED), 1364 to 1458 (PPES…SSVR), 1464 to 1567 (APAP…TLPS), 1572 to 1672 (QPIS…VGYS), 1674 to 1774 (PKRN…LEDK), 1777 to 1873 (PVGV…SKDG), and 1908 to 2010 (QAKR…VPES). The disordered stretch occupies residues 732–762 (SNKHGPGKPSLPSSSVTMPQQPPSAAPRNVA). 4 N-linked (GlcNAc...) asparagine glycosylation sites follow: Asn-808, Asn-869, Asn-933, and Asn-1017. The segment covering 1040 to 1049 (GDGPVEETKF) has biased composition (basic and acidic residues). The tract at residues 1040-1060 (GDGPVEETKFESGVPPELPGR) is disordered. N-linked (GlcNAc...) asparagine glycosylation is present at Asn-1108. The tract at residues 1139 to 1163 (GRGAPSEPSRTFETLQTNPETPSQR) is disordered. Residues 1146 to 1163 (PSRTFETLQTNPETPSQR) show a composition bias toward polar residues. 3 N-linked (GlcNAc...) asparagine glycosylation sites follow: Asn-1615, Asn-1677, and Asn-1864. A disordered region spans residues 1916–1965 (EETENGYVSQRPRRNEIRGAKSAAQTSASSNSNRPTHPIGEWITLRPTDG). Over residues 1935–1947 (AKSAAQTSASSNS) the composition is skewed to low complexity. A helical transmembrane segment spans residues 2021-2041 (WFMALVAMAAFVLIVIIIAIL). The Cytoplasmic segment spans residues 2042-2322 (CVTGSSAKYR…NLTAGFSSFV (281 aa)). 3 disordered regions span residues 2081–2114 (NMTR…SVLG), 2167–2254 (YVVS…ADDI), and 2276–2322 (MVRA…SSFV). Residues 2092-2101 (PGTTQSWLSD) are compositionally biased toward polar residues. Low complexity predominate over residues 2207–2223 (PSSSGGSQPQGSPQQQQ). Over residues 2227–2238 (DSFDEEDDVDDD) the composition is skewed to acidic residues. Composition is skewed to polar residues over residues 2282–2302 (LTNQ…STSE) and 2310–2322 (ATPN…SSFV).

Belongs to the sidekick family.

It localises to the membrane. Cell adhesion protein. This chain is Protein sidekick homolog (rig-4), found in Caenorhabditis briggsae.